Here is a 117-residue protein sequence, read N- to C-terminus: Ig heavy chain V-A2 region K-25 (117 aa).

Pyrrolidone carboxylic acid is present on Q1. The Ig-like domain occupies 1–106; it reads QSVKESEGGL…GLSYLKSSVD (106 aa). Cysteines 21 and 91 form a disulfide.

The chain is Ig heavy chain V-A2 region K-25 from Oryctolagus cuniculus (Rabbit).